Here is a 376-residue protein sequence, read N- to C-terminus: 26S proteasome non-ATPase regulatory subunit 13 (376 aa).

The PCI domain occupies 171 to 338 (SYYKDALRFL…KRVHMTWVQP (168 aa)).

Component of the 19S proteasome regulatory particle complex. The 26S proteasome consists of a 20S core particle (CP) and two 19S regulatory subunits (RP). The regulatory particle is made of a lid composed of 9 subunits including PSMD13, a base containing 6 ATPases and few additional components.

Its function is as follows. Component of the 26S proteasome, a multiprotein complex involved in the ATP-dependent degradation of ubiquitinated proteins. This complex plays a key role in the maintenance of protein homeostasis by removing misfolded or damaged proteins, which could impair cellular functions, and by removing proteins whose functions are no longer required. Therefore, the proteasome participates in numerous cellular processes, including cell cycle progression, apoptosis, or DNA damage repair. The polypeptide is 26S proteasome non-ATPase regulatory subunit 13 (Gallus gallus (Chicken)).